The following is a 203-amino-acid chain: MAEQTETSTAGYNYVSYGTEQHPIAGLSRVVRHITGHDSEGRSVFLSTDIGDHHRTLGEKQAISNIIYSTNQTPVELNGNHDIEFARNTEPGLHVKDGSVARLIDFAPGVESPLHRAVSLDYGVVIEGVFKMVLDSGEERIMRPGDISVQRATAHKWINVTGNGTLPGRMLFVLLDCNDVYVNGKKMEGYLGTLAKDYEGRSS.

The interval 105–171 is cupin-like domain; sequence DFAPGVESPL…GNGTLPGRML (67 aa).

Belongs to the virC family.

It participates in secondary metabolite biosynthesis. Its function is as follows. Cupin-domain-containing oxidoreductase; part of the gene cluster that mediates the biosynthesis of flavoglaucin and congeners (including aspergin, dihydroauroglaucin and auroglaucin), prenylated salicylaldehyde derivatives carrying a saturated or an unsaturated C-7 side chain. The PKS fogA releases the carboxylic acid (8E,10E,12E)-3,5,7-trihydroxytetradeca-8,10,12-trienoic acid as its product, as well as derivatives with one and two double bonds. FogA is indeed able to reduce the initial triketide, thus being at least partially responsible for the differently saturated heptyl side chains of flavoglaucin congeners. The oxidoreductases fogB, fogC and fogD modify the nascent polyketide in fogA-bound form and, together, fogA, fogB, fogC and fogD are necessary for the formation of the aromatic core and the cyclized PKS products are released as salicyl alcohols. In particular, fogB is responsible for oxidation of a hydroxyl group or reduction of remaining double bond(s) at the C-7 residue whereas fogD is probably involved in the reductive release of the modified PKS products. The cytochrome P450 monooxygenase fogE is then responsible for the hydroxylation at C-3 of the benzene ring. The fogE products are substrates of the prenyltransferase fogH and the prenylated benzyl alcohols are subsequently oxidized by the fogF to produce the final aryl aldehydes flavoglaucin and congeners. The short-chain dehydrogenase fogG does not seem to be involved in the biosynthesis of the prenylated salicylaldehyde derivatives. This Aspergillus ruber (strain CBS 135680) protein is Cupin-domain-containing oxidoreductase fogC.